Consider the following 358-residue polypeptide: Protein ttm-2 (358 aa).

The protein belongs to the arrestin family.

Involved in resistance to B.thuringiensis pore-forming toxin Cry5B downstream of the sek-1 and pmk-1 MAPK kinase pathway. This chain is Protein ttm-2, found in Caenorhabditis elegans.